We begin with the raw amino-acid sequence, 272 residues long: MRQIAIYGKGGIGKSTTTQNLTAALGESGKKIMIVGCDPKADSTRLILGGLTQKTVMDTLREEGEDIDLEDILKPGFSGIKCVESGGPEPGVGCAGRGIITSINMLESLGAYESDLDYVFYDVLGDVVCGGFAMPIREGKAQEIYIVASGELMALYAANNIAKGIQKYAKSGGTRLGGIICNSRQVDYEHELLEAFAKELGSQLIYFVPRDNIVQRAEINKKAVIEFEPECGQANEYRALAKSIDENKMFVIPKPMHTDRLEELMMEHGVLG.

Residue 8–15 (GKGGIGKS) participates in ATP binding. Position 94 (cysteine 94) interacts with [4Fe-4S] cluster. Arginine 97 carries the ADP-ribosylarginine; by dinitrogenase reductase ADP-ribosyltransferase modification. Cysteine 129 is a [4Fe-4S] cluster binding site.

Belongs to the NifH/BchL/ChlL family. Homodimer. The cofactor is [4Fe-4S] cluster. In terms of processing, the reversible ADP-ribosylation of Arg-97 inactivates the nitrogenase reductase and regulates nitrogenase activity.

It carries out the reaction N2 + 8 reduced [2Fe-2S]-[ferredoxin] + 16 ATP + 16 H2O = H2 + 8 oxidized [2Fe-2S]-[ferredoxin] + 2 NH4(+) + 16 ADP + 16 phosphate + 6 H(+). In terms of biological role, the key enzymatic reactions in nitrogen fixation are catalyzed by the nitrogenase complex, which has 2 components: the iron protein and the molybdenum-iron protein. This Alkaliphilus metalliredigens (strain QYMF) protein is Nitrogenase iron protein.